The chain runs to 264 residues: tRNA pseudouridine synthase A (264 aa).

D51 serves as the catalytic Nucleophile. Y109 is a substrate binding site.

It belongs to the tRNA pseudouridine synthase TruA family. In terms of assembly, homodimer.

It catalyses the reaction uridine(38/39/40) in tRNA = pseudouridine(38/39/40) in tRNA. Its function is as follows. Formation of pseudouridine at positions 38, 39 and 40 in the anticodon stem and loop of transfer RNAs. This chain is tRNA pseudouridine synthase A, found in Pasteurella multocida (strain Pm70).